We begin with the raw amino-acid sequence, 416 residues long: L-cysteine:1D-myo-inositol 2-amino-2-deoxy-alpha-D-glucopyranoside ligase (416 aa).

Cys45 serves as a coordination point for Zn(2+). Residues 45–48, Thr60, and 83–85 contribute to the L-cysteinyl-5'-AMP site; these read CGIT and NVT. Residues 47 to 57 carry the 'HIGH' region motif; that stretch reads ITPYDSTHLGH. The 'ERGGDP' region motif lies at 191–196; the sequence is ERGGDP. Trp232 is a binding site for L-cysteinyl-5'-AMP. Cys236 lines the Zn(2+) pocket. 254–256 contributes to the L-cysteinyl-5'-AMP binding site; that stretch reads GSD. Residue His261 coordinates Zn(2+). Val286 contributes to the L-cysteinyl-5'-AMP binding site. A 'KMSKS' region motif is present at residues 292–296; the sequence is KMSKS.

It belongs to the class-I aminoacyl-tRNA synthetase family. MshC subfamily. As to quaternary structure, monomer. It depends on Zn(2+) as a cofactor.

The catalysed reaction is 1D-myo-inositol 2-amino-2-deoxy-alpha-D-glucopyranoside + L-cysteine + ATP = 1D-myo-inositol 2-(L-cysteinylamino)-2-deoxy-alpha-D-glucopyranoside + AMP + diphosphate + H(+). Catalyzes the ATP-dependent condensation of GlcN-Ins and L-cysteine to form L-Cys-GlcN-Ins. This chain is L-cysteine:1D-myo-inositol 2-amino-2-deoxy-alpha-D-glucopyranoside ligase, found in Brachybacterium faecium (strain ATCC 43885 / DSM 4810 / JCM 11609 / LMG 19847 / NBRC 14762 / NCIMB 9860 / 6-10).